We begin with the raw amino-acid sequence, 1881 residues long: Nuclear pore membrane glycoprotein 210-like (1881 aa).

The signal sequence occupies residues 1–32 (MIAFGAPRRRSFGLLFSLAPHLFFLFLIGTLA). Residues Asn80, Asn344, and Asn808 are each glycosylated (N-linked (GlcNAc...) asparagine). Residues 1078-1150 (FPPFRLIPEK…TIQTVNEDTG (73 aa)) form the BIG2 domain. Residue Asn1441 is glycosylated (N-linked (GlcNAc...) asparagine). The helical transmembrane segment at 1804 to 1824 (YQILLFTLFAVLASTSFIFLA) threads the bilayer.

This sequence belongs to the NUP210 family. Expressed in testis.

The protein localises to the nucleus membrane. The protein resides in the nucleus. It is found in the nucleoplasm. The polypeptide is Nuclear pore membrane glycoprotein 210-like (Nup210l) (Mus musculus (Mouse)).